Consider the following 301-residue polypeptide: ATP synthase gamma chain (301 aa).

The protein belongs to the ATPase gamma chain family. In terms of assembly, F-type ATPases have 2 components, CF(1) - the catalytic core - and CF(0) - the membrane proton channel. CF(1) has five subunits: alpha(3), beta(3), gamma(1), delta(1), epsilon(1). CF(0) has three main subunits: a, b and c.

The protein localises to the cell inner membrane. Produces ATP from ADP in the presence of a proton gradient across the membrane. The gamma chain is believed to be important in regulating ATPase activity and the flow of protons through the CF(0) complex. This chain is ATP synthase gamma chain, found in Bordetella parapertussis (strain 12822 / ATCC BAA-587 / NCTC 13253).